The following is a 447-amino-acid chain: Phosphoglucosamine mutase (447 aa).

The active-site Phosphoserine intermediate is the serine 104. Residues serine 104, aspartate 243, aspartate 245, and aspartate 247 each coordinate Mg(2+). A Phosphoserine modification is found at serine 104.

Belongs to the phosphohexose mutase family. The cofactor is Mg(2+). In terms of processing, activated by phosphorylation.

It catalyses the reaction alpha-D-glucosamine 1-phosphate = D-glucosamine 6-phosphate. Functionally, catalyzes the conversion of glucosamine-6-phosphate to glucosamine-1-phosphate. In Corynebacterium glutamicum (strain ATCC 13032 / DSM 20300 / JCM 1318 / BCRC 11384 / CCUG 27702 / LMG 3730 / NBRC 12168 / NCIMB 10025 / NRRL B-2784 / 534), this protein is Phosphoglucosamine mutase.